The following is a 203-amino-acid chain: Endo-type membrane-bound lytic murein transglycosylase A (203 aa).

The N-terminal stretch at 1 to 15 is a signal peptide; the sequence is MKLRWLLILVVFLAG. The N-palmitoyl cysteine moiety is linked to residue C16. Residue C16 is the site of S-diacylglycerol cysteine attachment.

Belongs to the transglycosylase Slt family.

Its subcellular location is the cell outer membrane. The catalysed reaction is Endolytic cleavage of the (1-&gt;4)-beta-glycosidic linkage between N-acetylmuramic acid (MurNAc) and N-acetylglucosamine (GlcNAc) residues in peptidoglycan with concomitant formation of a 1,6-anhydrobond in the MurNAc residue.. In terms of biological role, murein-degrading enzyme. May play a role in recycling of muropeptides during cell elongation and/or cell division. Preferentially cleaves at a distance of more than two disaccharide units from the ends of the glycan chain. The sequence is that of Endo-type membrane-bound lytic murein transglycosylase A from Klebsiella pneumoniae (strain 342).